A 677-amino-acid chain; its full sequence is UPF0652 protein (677 aa).

The segment at 38–84 (ETPGMCCECTDQPAEVVCLQCQDELCTVCSTSLHRRGSRRSHIFKNK) adopts a B box-type; atypical zinc-finger fold. The Zn(2+) site is built by cysteine 43, cysteine 46, cysteine 66, and histidine 71. Residues 91-111 (YDELNKRDRQPPLHGKEDEKV) show a composition bias toward basic and acidic residues. Disordered regions lie at residues 91-142 (YDEL…NNNI) and 156-192 (LNPL…IDED). A compositionally biased stretch (low complexity) spans 113-126 (NNNNNNNNTNNTNN). Over residues 163 to 178 (HTNQQRNGGGSNNHQI) the composition is skewed to polar residues.

It belongs to the UPF0652 family.

This is UPF0652 protein from Dictyostelium discoideum (Social amoeba).